We begin with the raw amino-acid sequence, 449 residues long: Transport protein ComB (449 aa).

Residues 1-20 (MKPEFLESAEFYNRRYHNFS) are Cytoplasmic-facing. The helical transmembrane segment at 21–41 (SSVIVPMALLLVFLLGFATVA) threads the bilayer. Residues 42–449 (EKEMSLSTRA…YYLDQFLNKE (408 aa)) are Extracellular-facing.

Belongs to the membrane fusion protein (MFP) (TC 8.A.1) family.

The protein resides in the cell membrane. Required for induction of competence. In Streptococcus pneumoniae (strain ATCC BAA-255 / R6), this protein is Transport protein ComB (comB).